The primary structure comprises 580 residues: PX domain-containing protein kinase-like protein (580 aa).

The PX domain maps to 14 to 126; that stretch reads LDDTVPLTAA…KFLDPNNYSA (113 aa). In terms of domain architecture, Protein kinase spans 88–481; the sequence is FIAERQKGLQ…VENSEEQPVK (394 aa). The interval 433–551 is disordered; it reads EQKQIHQHRR…LPQAVNGVNR (119 aa). Basic residues-rich tracts occupy residues 437–448 and 457–469; these read IHQHRRLTRAQS and KRRK…KSKR. Residues 483–514 show a composition bias toward low complexity; that stretch reads SNANNSAGSGASSPLTSPSSPTPPSTAGLSSA. Residues 515–531 show a composition bias toward pro residues; sequence LPPPPPPPPPPPPPAGP. The WH2 domain maps to 549–568; it reads VNRGALLSSIQNFQKGTLRK.

Belongs to the protein kinase superfamily.

It localises to the cytoplasm. It is found in the cell membrane. Its function is as follows. Binds to and modulates brain Na,K-ATPase subunits ATP1B1 and ATP1B3 and may thereby participate in the regulation of electrical excitability and synaptic transmission. May not display kinase activity. The chain is PX domain-containing protein kinase-like protein from Rattus norvegicus (Rat).